Reading from the N-terminus, the 92-residue chain is Protein S100-A12 (92 aa).

2 EF-hand domains span residues 13 to 48 (NIFH…IKNI) and 49 to 84 (KDKA…ALKA). Residue histidine 16 coordinates Cu cation. Histidine 16 is a binding site for Zn(2+). Ca(2+)-binding residues include serine 19, lysine 22, and histidine 24. Aspartate 26 provides a ligand contact to Cu cation. Residue aspartate 26 participates in Zn(2+) binding. Ca(2+) is bound by residues threonine 27 and glutamate 32. The interval 38 to 53 (TKELANTIKNIKDKAV) is hinge domain. Ca(2+) is bound by residues aspartate 62, asparagine 64, aspartate 66, glutamine 68, and glutamate 73. Cu cation is bound by residues histidine 86 and histidine 90. The Zn(2+) site is built by histidine 86 and histidine 90.

The protein belongs to the S-100 family. As to quaternary structure, homodimer. Homooligomer (tetramer or hexamer) in the presence of calcium, zinc and copper ions. Interacts with AGER and both calcium and zinc are essential for the interaction. Interacts with CACYBP in a calcium-dependent manner. Predominantly expressed by neutrophils, monocytes and activated macrophages. Expressed by eosinophils and macrophages in asthmatic airways in regions where mast cells accumulate. Found in high concentrations in the serum of patients suffering from various inflammatory disorders, such as rheumatoid arthritis, psoriatic arthritis, Crohn's disease, ulcerative colitis, and Kawasaki disease.

It localises to the secreted. The protein resides in the cytoplasm. Its subcellular location is the cytoskeleton. The protein localises to the cell membrane. Its function is as follows. S100A12 is a calcium-, zinc- and copper-binding protein which plays a prominent role in the regulation of inflammatory processes and immune response. Its pro-inflammatory activity involves recruitment of leukocytes, promotion of cytokine and chemokine production, and regulation of leukocyte adhesion and migration. Acts as an alarmin or a danger associated molecular pattern (DAMP) molecule and stimulates innate immune cells via binding to receptor for advanced glycation endproducts (AGER). Binding to AGER activates the MAP-kinase and NF-kappa-B signaling pathways leading to production of pro-inflammatory cytokines and up-regulation of cell adhesion molecules ICAM1 and VCAM1. Acts as a monocyte and mast cell chemoattractant. Can stimulate mast cell degranulation and activation which generates chemokines, histamine and cytokines inducing further leukocyte recruitment to the sites of inflammation. Can inhibit the activity of matrix metalloproteinases; MMP2, MMP3 and MMP9 by chelating Zn(2+) from their active sites. Possesses filariacidal and filariastatic activity. Calcitermin possesses antifungal activity against C.albicans and is also active against E.coli and P.aeruginosa but not L.monocytogenes and S.aureus. This Homo sapiens (Human) protein is Protein S100-A12 (S100A12).